A 341-amino-acid chain; its full sequence is UDP-3-O-acylglucosamine N-acyltransferase (341 aa).

The Proton acceptor role is filled by H241.

This sequence belongs to the transferase hexapeptide repeat family. LpxD subfamily. As to quaternary structure, homotrimer.

It carries out the reaction a UDP-3-O-[(3R)-3-hydroxyacyl]-alpha-D-glucosamine + a (3R)-hydroxyacyl-[ACP] = a UDP-2-N,3-O-bis[(3R)-3-hydroxyacyl]-alpha-D-glucosamine + holo-[ACP] + H(+). It participates in bacterial outer membrane biogenesis; LPS lipid A biosynthesis. Functionally, catalyzes the N-acylation of UDP-3-O-acylglucosamine using 3-hydroxyacyl-ACP as the acyl donor. Is involved in the biosynthesis of lipid A, a phosphorylated glycolipid that anchors the lipopolysaccharide to the outer membrane of the cell. This Saccharophagus degradans (strain 2-40 / ATCC 43961 / DSM 17024) protein is UDP-3-O-acylglucosamine N-acyltransferase.